The sequence spans 129 residues: Protein RfbJ (129 aa).

This sequence belongs to the glycosyltransferase 2 family.

The protein operates within bacterial outer membrane biogenesis; lipopolysaccharide biosynthesis. In Shigella flexneri, this protein is Protein RfbJ (rfbJ).